The primary structure comprises 118 residues: Large ribosomal subunit protein bL20 (118 aa).

It belongs to the bacterial ribosomal protein bL20 family.

Binds directly to 23S ribosomal RNA and is necessary for the in vitro assembly process of the 50S ribosomal subunit. It is not involved in the protein synthesizing functions of that subunit. This is Large ribosomal subunit protein bL20 from Campylobacter concisus (strain 13826).